A 170-amino-acid chain; its full sequence is Cyclic pyranopterin monophosphate synthase 1 (170 aa).

Residues Leu-79–His-81 and Met-116–Glu-117 contribute to the substrate site. Asp-131 is a catalytic residue.

This sequence belongs to the MoaC family. In terms of assembly, homohexamer; trimer of dimers.

The enzyme catalyses (8S)-3',8-cyclo-7,8-dihydroguanosine 5'-triphosphate = cyclic pyranopterin phosphate + diphosphate. It functions in the pathway cofactor biosynthesis; molybdopterin biosynthesis. Its function is as follows. Catalyzes the conversion of (8S)-3',8-cyclo-7,8-dihydroguanosine 5'-triphosphate to cyclic pyranopterin monophosphate (cPMP). This is Cyclic pyranopterin monophosphate synthase 1 (moaC1) from Mycobacterium bovis (strain ATCC BAA-935 / AF2122/97).